A 207-amino-acid chain; its full sequence is Ribosomal RNA small subunit methyltransferase G (207 aa).

Residues glycine 73, leucine 78, valine 124–glutamate 125, and arginine 139 each bind S-adenosyl-L-methionine.

This sequence belongs to the methyltransferase superfamily. RNA methyltransferase RsmG family.

It is found in the cytoplasm. The enzyme catalyses guanosine(527) in 16S rRNA + S-adenosyl-L-methionine = N(7)-methylguanosine(527) in 16S rRNA + S-adenosyl-L-homocysteine. Specifically methylates the N7 position of guanine in position 527 of 16S rRNA. The polypeptide is Ribosomal RNA small subunit methyltransferase G (Klebsiella pneumoniae (strain 342)).